A 471-amino-acid polypeptide reads, in one-letter code: (13S,14R)-1,13-dihydroxy-N-methylcanadine 13-O-acetyltransferase AT1 (471 aa).

This sequence belongs to the plant acyltransferase family.

The catalysed reaction is (13S,14R)-1,13-dihydroxy-N-methylcanadine + acetyl-CoA = (13S,14R)-13-O-acetyl-1-hydroxy-N-methylcanadine + CoA. It functions in the pathway alkaloid biosynthesis. Its function is as follows. Acetyltransferase involved in the biosynthesis of the benzylisoquinoline alkaloid noscapine. Converts (13S,14R)-1,13-dihydroxy-N-methylcanadine to (13S,14R)-13-O-acetyl-1-hydroxy-N-methylcanadine. This is (13S,14R)-1,13-dihydroxy-N-methylcanadine 13-O-acetyltransferase AT1 from Papaver somniferum (Opium poppy).